The sequence spans 366 residues: MNKVVLLCRPGFEKECAAEITDKAGKRELFGFARVKENTGYVIYECYQPEDGEKLISELPFSSLIFARQWFVVGELLQHLPPEDRITPIVGMLQGVVEKGGELRVEVADTNESKELMKFCRKFTVPLRAALRDAGVLTHYETPKRPVVHVFFIAPGCCYTGYSLAHNHSPFYMGIPRLKFPSDAPSRSTLKLEEALHVFIPEDEWDERLANGMYAVDLGACPGGWTYQLVKRNMWVYSVDNGPMAQSLMDTGQVTWLREDGFRYRPNRNNISWMVCDMVEKPAKVTALMAQWLVNGWCRETIFNLKLPMKKRYEEVSHNLAYLQAQLDEHGVNAQIQARQLYHDREEVTVHVRRLWAAVGGRRDER.

S-adenosyl-L-methionine is bound by residues serine 188, 221–224, aspartate 240, aspartate 260, and aspartate 277; that span reads CPGG. Lysine 306 functions as the Proton acceptor in the catalytic mechanism.

This sequence belongs to the class I-like SAM-binding methyltransferase superfamily. RNA methyltransferase RlmE family. RlmM subfamily. Monomer.

The protein localises to the cytoplasm. The catalysed reaction is cytidine(2498) in 23S rRNA + S-adenosyl-L-methionine = 2'-O-methylcytidine(2498) in 23S rRNA + S-adenosyl-L-homocysteine + H(+). In terms of biological role, catalyzes the 2'-O-methylation at nucleotide C2498 in 23S rRNA. The polypeptide is Ribosomal RNA large subunit methyltransferase M (Salmonella arizonae (strain ATCC BAA-731 / CDC346-86 / RSK2980)).